Consider the following 1663-residue polypeptide: Kotanin synthase (1663 aa).

The interval 19–168 (RPHEFSFNTQ…PLPVYGGPCH (150 aa)) is N-terminal acylcarrier protein transacylase domain (SAT). Positions 301 to 731 (DSRIAVVGMS…GGNTSLLLEE (431 aa)) constitute a Ketosynthase family 3 (KS3) domain. Active-site for beta-ketoacyl synthase activity residues include Cys474, His609, and His650. Positions 830-1149 (FIFSGQGSFY…SMCTLQETGV (320 aa)) are malonyl-CoA:ACP transacylase (MAT) domain. The interval 1209–1527 (TALVHQIMEE…PRILMNRFFD (319 aa)) is product template (PT) domain. Residues 1213 to 1349 (HQIMEESFRP…GVVRCGDRQS (137 aa)) form an N-terminal hotdog fold region. Residues 1213-1523 (HQIMEESFRP…LRPLPRILMN (311 aa)) enclose the PKS/mFAS DH domain. His1245 serves as the catalytic Proton acceptor; for dehydratase activity. The C-terminal hotdog fold stretch occupies residues 1376–1523 (QASRVSRDLV…LRPLPRILMN (148 aa)). Catalysis depends on Asp1434, which acts as the Proton donor; for dehydratase activity. The segment at 1544-1580 (DLPQVQHQPSPTTDSGPDDDPKDPNTGPLTPEVDLPV) is disordered. Residues 1586 to 1663 (KANTKLVRGA…ELKEYLTASW (78 aa)) form the Carrier domain. An O-(pantetheine 4'-phosphoryl)serine modification is found at Ser1623.

It depends on pantetheine 4'-phosphate as a cofactor.

It functions in the pathway secondary metabolite biosynthesis. In terms of biological role, non-reducing polyketide synthase; part of the gene cluster that mediates the biosynthesis of the bicoumarin kotanin. The non-reducing polyketide synthase ktnS first catalyzes the formation of the pentaketidic 4,7-dihydroxy-5-methylcoumarin from acetyl coenzyme A and 4 malonyl coenzyme A molecules. Further O-methylation by ktnB leads to the formation of 7-demethylsiderin. Then, an oxidative phenol coupling catalyzed by the cytochrome P450 monooxygenase ktnC forms the 8,8'-dimer P-orlandin via dimerization the monomeric precursor, 7-demethylsiderin. P-orlandin is subsequently O-methylated in a stepwise fashion to demethylkotanin and kotanin. The sequence is that of Kotanin synthase from Aspergillus niger (strain ATCC MYA-4892 / CBS 513.88 / FGSC A1513).